A 99-amino-acid polypeptide reads, in one-letter code: Plastocyanin (99 aa).

The Plastocyanin-like domain maps to 1-99 (VEILLGGEDG…AGMVGKVTVN (99 aa)). Cu cation-binding residues include His37, Cys84, His87, and Met92.

The protein belongs to the plastocyanin family. The cofactor is Cu(2+).

The protein localises to the plastid. It localises to the chloroplast thylakoid membrane. Participates in electron transfer between P700 and the cytochrome b6-f complex in photosystem I. The polypeptide is Plastocyanin (PETE) (Sambucus nigra (European elder)).